We begin with the raw amino-acid sequence, 368 residues long: Chaperone protein DnaJ (368 aa).

In terms of domain architecture, J spans 5–70 (DYYQVLGVPR…KKRKLYDTHG (66 aa)). A CR-type zinc finger spans residues 124-201 (GVERQIQIPT…CNGAGRVEDH (78 aa)). Residues C137, C140, C153, C156, C175, C178, C189, and C192 each contribute to the Zn(2+) site. CXXCXGXG motif repeat units follow at residues 137–144 (CTHCNGSG), 153–160 (CGTCRGSG), 175–182 (CPHCGGRG), and 189–196 (CKVCNGAG).

The protein belongs to the DnaJ family. Homodimer. Zn(2+) serves as cofactor.

It is found in the cytoplasm. Participates actively in the response to hyperosmotic and heat shock by preventing the aggregation of stress-denatured proteins and by disaggregating proteins, also in an autonomous, DnaK-independent fashion. Unfolded proteins bind initially to DnaJ; upon interaction with the DnaJ-bound protein, DnaK hydrolyzes its bound ATP, resulting in the formation of a stable complex. GrpE releases ADP from DnaK; ATP binding to DnaK triggers the release of the substrate protein, thus completing the reaction cycle. Several rounds of ATP-dependent interactions between DnaJ, DnaK and GrpE are required for fully efficient folding. Also involved, together with DnaK and GrpE, in the DNA replication of plasmids through activation of initiation proteins. The chain is Chaperone protein DnaJ from Xylella fastidiosa (strain M12).